Consider the following 635-residue polypeptide: 1-deoxy-D-xylulose-5-phosphate synthase (635 aa).

Thiamine diphosphate-binding positions include His73 and 114–116 (SHA). Asp146 contacts Mg(2+). Residues 147-148 (GA), Asn176, Tyr287, and Glu368 each bind thiamine diphosphate. Asn176 contributes to the Mg(2+) binding site.

Belongs to the transketolase family. DXPS subfamily. As to quaternary structure, homodimer. The cofactor is Mg(2+). It depends on thiamine diphosphate as a cofactor.

It carries out the reaction D-glyceraldehyde 3-phosphate + pyruvate + H(+) = 1-deoxy-D-xylulose 5-phosphate + CO2. It participates in metabolic intermediate biosynthesis; 1-deoxy-D-xylulose 5-phosphate biosynthesis; 1-deoxy-D-xylulose 5-phosphate from D-glyceraldehyde 3-phosphate and pyruvate: step 1/1. Catalyzes the acyloin condensation reaction between C atoms 2 and 3 of pyruvate and glyceraldehyde 3-phosphate to yield 1-deoxy-D-xylulose-5-phosphate (DXP). This is 1-deoxy-D-xylulose-5-phosphate synthase from Corynebacterium diphtheriae (strain ATCC 700971 / NCTC 13129 / Biotype gravis).